A 319-amino-acid chain; its full sequence is ATP-dependent 6-phosphofructokinase (319 aa).

Gly11 is a binding site for ATP. 21-25 (RAVVR) is a binding site for ADP. ATP is bound by residues 72–73 (RY) and 102–105 (GDGS). A Mg(2+)-binding site is contributed by Asp103. Substrate is bound at residue 125–127 (TID). The active-site Proton acceptor is Asp127. Arg154 contributes to the ADP binding site. Residues Arg162 and 169-171 (MGR) each bind substrate. ADP is bound by residues 185–187 (GAE), Arg211, and 213–215 (KKH). Substrate contacts are provided by residues Glu222, Arg243, and 249-252 (HVQR).

It belongs to the phosphofructokinase type A (PFKA) family. ATP-dependent PFK group I subfamily. Prokaryotic clade 'B1' sub-subfamily. In terms of assembly, homotetramer. Mg(2+) serves as cofactor.

The protein resides in the cytoplasm. The enzyme catalyses beta-D-fructose 6-phosphate + ATP = beta-D-fructose 1,6-bisphosphate + ADP + H(+). It functions in the pathway carbohydrate degradation; glycolysis; D-glyceraldehyde 3-phosphate and glycerone phosphate from D-glucose: step 3/4. With respect to regulation, allosterically activated by ADP and other diphosphonucleosides, and allosterically inhibited by phosphoenolpyruvate. Catalyzes the phosphorylation of D-fructose 6-phosphate to fructose 1,6-bisphosphate by ATP, the first committing step of glycolysis. The chain is ATP-dependent 6-phosphofructokinase from Listeria monocytogenes serotype 4b (strain CLIP80459).